The following is a 410-amino-acid chain: MCPYRLDPEGADTHGETARLREQGPIARVELQDGVLAWSVHDYAVAKQIMADERFSKNPRKNWPAYINGEISNGWPLITWVAMDTMATQDGADHARLRKLLLKAFTERRVESMRPHIEKTVKELLDNMAAKADDEIVDIKEMFHAELPTRLMCDLFGVPEERRAEVLAGGHKNIDTRISSEAAEANLGQWQEAISDLVEYKRHHPGDDLTSALIEARDEGSRLSDSELIGTLHLLLGAGSETLVNALAHSSLALLVDADLRKKVTSGEIPWVNVWEETLRVESPVAHLPFRYATEDFEIGGVKISKGDPLLVDFAGIGRDPAVHSDAPDEFDALRPDKTHLSFGHGVHYCLGARLAKHAWMIGIPALFERFPDMELAVRRDELKGQGSFVVNGHASLPVHLKGRAAALAR.

A heme-binding site is contributed by C350.

This sequence belongs to the cytochrome P450 family. The cofactor is heme.

It catalyses the reaction 2-hydroxy-5-methyl-1-naphthoate + 2 reduced [2Fe-2S]-[ferredoxin] + O2 + 2 H(+) = 2,7-dihydroxy-5-methyl-1-naphthoate + 2 oxidized [2Fe-2S]-[ferredoxin] + H2O. It participates in antibiotic biosynthesis. Its function is as follows. Involved in the biosynthesis of the naphthoic acid (NA) moiety in the chromophore of the enedyine antitumor antibiotic neocarzinostatin (NCS). Catalyzes the hydroxylation at C-7 position of 2-hydroxy-5-methyl-1-naphthoate to yield 2,7-dihydroxy-5-methyl-1-naphthoate. The chain is 2-hydroxy-5-methyl-1-naphthoate 7-hydroxylase from Streptomyces carzinostaticus.